Reading from the N-terminus, the 262-residue chain is tRNA pseudouridine synthase A 2 (262 aa).

Aspartate 66 serves as the catalytic Nucleophile. Tyrosine 125 provides a ligand contact to substrate.

The protein belongs to the tRNA pseudouridine synthase TruA family. In terms of assembly, homodimer.

The catalysed reaction is uridine(38/39/40) in tRNA = pseudouridine(38/39/40) in tRNA. Its function is as follows. Formation of pseudouridine at positions 38, 39 and 40 in the anticodon stem and loop of transfer RNAs. This is tRNA pseudouridine synthase A 2 from Protochlamydia amoebophila (strain UWE25).